Here is a 390-residue protein sequence, read N- to C-terminus: Chorismate synthase (390 aa).

Arginine 48 serves as a coordination point for NADP(+). FMN-binding positions include 126–128, glycine 286, 301–305, and arginine 328; these read RAS and KPTSS.

It belongs to the chorismate synthase family. FMNH2 serves as cofactor.

It carries out the reaction 5-O-(1-carboxyvinyl)-3-phosphoshikimate = chorismate + phosphate. It participates in metabolic intermediate biosynthesis; chorismate biosynthesis; chorismate from D-erythrose 4-phosphate and phosphoenolpyruvate: step 7/7. Catalyzes the anti-1,4-elimination of the C-3 phosphate and the C-6 proR hydrogen from 5-enolpyruvylshikimate-3-phosphate (EPSP) to yield chorismate, which is the branch point compound that serves as the starting substrate for the three terminal pathways of aromatic amino acid biosynthesis. This reaction introduces a second double bond into the aromatic ring system. This Sulfurisphaera tokodaii (strain DSM 16993 / JCM 10545 / NBRC 100140 / 7) (Sulfolobus tokodaii) protein is Chorismate synthase.